We begin with the raw amino-acid sequence, 248 residues long: Proteasome subunit alpha (248 aa).

It belongs to the peptidase T1A family. In terms of assembly, the 20S proteasome core is composed of 14 alpha and 14 beta subunits that assemble into four stacked heptameric rings, resulting in a barrel-shaped structure. The two inner rings, each composed of seven catalytic beta subunits, are sandwiched by two outer rings, each composed of seven alpha subunits. The catalytic chamber with the active sites is on the inside of the barrel. Has a gated structure, the ends of the cylinder being occluded by the N-termini of the alpha-subunits. Is capped by the proteasome-associated ATPase, ARC.

The protein localises to the cytoplasm. It participates in protein degradation; proteasomal Pup-dependent pathway. Its activity is regulated as follows. The formation of the proteasomal ATPase ARC-20S proteasome complex, likely via the docking of the C-termini of ARC into the intersubunit pockets in the alpha-rings, may trigger opening of the gate for substrate entry. Interconversion between the open-gate and close-gate conformations leads to a dynamic regulation of the 20S proteasome proteolysis activity. Its function is as follows. Component of the proteasome core, a large protease complex with broad specificity involved in protein degradation. The protein is Proteasome subunit alpha of Mycobacterium bovis (strain BCG / Pasteur 1173P2).